The following is a 164-amino-acid chain: Large ribosomal subunit protein uL15 (164 aa).

2 disordered regions span residues 1–49 (MTKL…SIAG) and 143–164 (EKAGGKLTTTKPEAAQDASAEA). Over residues 22–36 (RGPGSGKGKTAGRGV) the composition is skewed to gly residues.

Belongs to the universal ribosomal protein uL15 family. In terms of assembly, part of the 50S ribosomal subunit.

Its function is as follows. Binds to the 23S rRNA. The polypeptide is Large ribosomal subunit protein uL15 (Phenylobacterium zucineum (strain HLK1)).